A 96-amino-acid polypeptide reads, in one-letter code: Co-chaperonin GroES (96 aa).

The protein belongs to the GroES chaperonin family. Heptamer of 7 subunits arranged in a ring. Interacts with the chaperonin GroEL.

It is found in the cytoplasm. In terms of biological role, together with the chaperonin GroEL, plays an essential role in assisting protein folding. The GroEL-GroES system forms a nano-cage that allows encapsulation of the non-native substrate proteins and provides a physical environment optimized to promote and accelerate protein folding. GroES binds to the apical surface of the GroEL ring, thereby capping the opening of the GroEL channel. The polypeptide is Co-chaperonin GroES (Buchnera aphidicola subsp. Myzus persicae (Myzus persicae primary endosymbiont)).